The sequence spans 250 residues: MSVHLLIVDALNLIRRIHAVQGASCLAACGHALSQLILHCTPSHAVAVFDDDERHESWRHQQLPQYKSGRAPIPEDLQALMPAIRAEFNRQSVTCWHASGFEADDIAATLAIKVAAGGHRVTLVSTDKGYCQLLSPSIQIRDYFQKRWLDMPFVMRHFGVQPQQLTDFWGLAGVSSSKIPGVAGIGPKSAAQLISEAGTLEALYQRLAQLPEKWRHRLEHDRDLAFLCRRIVTLDTAVTLQGNLQQLRLR.

D104 is a Mg(2+) binding site. The 5'-3' exonuclease domain occupies 160 to 249; the sequence is VQPQQLTDFW…LQGNLQQLRL (90 aa). Residues L171, A172, P180, V182, and I185 each contribute to the K(+) site. An interaction with DNA region spans residues 184-189; that stretch reads GIGPKS.

This sequence belongs to the Xni family. It depends on Mg(2+) as a cofactor. Requires K(+) as cofactor.

Has flap endonuclease activity. During DNA replication, flap endonucleases cleave the 5'-overhanging flap structure that is generated by displacement synthesis when DNA polymerase encounters the 5'-end of a downstream Okazaki fragment. This is Flap endonuclease Xni from Sodalis glossinidius (strain morsitans).